A 1095-amino-acid polypeptide reads, in one-letter code: Putative patatin-like phospholipase domain-containing protein M110.7 (1095 aa).

The chain crosses the membrane as a helical span at residues 9–29; sequence LLLIFENILELCMCITLVILI. Positions 75–113 are disordered; that stretch reads HKKRSSKEEMTPDKKRDSSEKISKQPPRELFEPNEQEQV. The segment covering 80–105 has biased composition (basic and acidic residues); sequence SKEEMTPDKKRDSSEKISKQPPRELF. Residues 144-237, 327-416, and 450-509 contribute to the a nucleoside 3',5'-cyclic phosphate site; these read VETL…LTSF, RKYE…IQFL, and IETG…TVMA. In terms of domain architecture, PNPLA spans 768–935; the sequence is IVFGGGGARG…VNNLPADIMR (168 aa). A GXGXXG motif is present at residues 772–777; that stretch reads GGGARG. The GXSXG signature appears at 799-803; it reads GTSIG. Residue serine 801 is the Nucleophile of the active site. The active-site Proton acceptor is aspartate 922. The short motif at 922 to 924 is the DGA/G element; it reads DGA.

The protein belongs to the NTE family.

It is found in the membrane. In Caenorhabditis elegans, this protein is Putative patatin-like phospholipase domain-containing protein M110.7.